The following is a 179-amino-acid chain: Archaemetzincin (179 aa).

Residue H128 coordinates Zn(2+). The active-site Proton acceptor is E129. 6 residues coordinate Zn(2+): H132, H138, C139, C144, C163, and C166.

The protein belongs to the peptidase M54 family. Monomer. Zn(2+) is required as a cofactor.

Probable zinc metalloprotease whose natural substrate is unknown. This Methanocaldococcus jannaschii (strain ATCC 43067 / DSM 2661 / JAL-1 / JCM 10045 / NBRC 100440) (Methanococcus jannaschii) protein is Archaemetzincin.